The following is a 203-amino-acid chain: MKSRNGPLRVGIGGPVGSGKTALTEKLCKAMRDDYSVAVVTNDIYTTEDAEALVRMQALPSDRIVGVETGGCPHTAIREDATINLQAIAGLNERFPDLDVVFIESGGDNLAATFSPDLADITIYVISVCQGEEIPRKGGPGITRSDLLVINKKDLAPHVGADLEVMDRDATRMRASRPFVFSDMKRGDGINSIVSFLREQGGL.

14–21 (GPVGSGKT) serves as a coordination point for GTP.

Belongs to the SIMIBI class G3E GTPase family. UreG subfamily. Homodimer. UreD, UreF and UreG form a complex that acts as a GTP-hydrolysis-dependent molecular chaperone, activating the urease apoprotein by helping to assemble the nickel containing metallocenter of UreC. The UreE protein probably delivers the nickel.

The protein localises to the cytoplasm. In terms of biological role, facilitates the functional incorporation of the urease nickel metallocenter. This process requires GTP hydrolysis, probably effectuated by UreG. The sequence is that of Urease accessory protein UreG from Rhizobium etli (strain CIAT 652).